A 129-amino-acid chain; its full sequence is Larval/pupal rigid cuticle protein 66 (129 aa).

The first 17 residues, 1-17 (MLVKFVACFVFVAVASA), serve as a signal peptide directing secretion. One can recognise a Chitin-binding type R&amp;R domain in the interval 18-90 (SDFSSFSYGV…ALIAAAPYIT (73 aa)).

Expressed in larval wing disc, forewing disc, diapausing wing, adult wing, and in very low amounts in fat body and testes.

In terms of biological role, component of the rigid cuticle of the larva and pupa of Hyalophora cecropia. The protein is Larval/pupal rigid cuticle protein 66 (CP66) of Hyalophora cecropia (Cecropia moth).